A 365-amino-acid chain; its full sequence is Red-sensitive opsin (365 aa).

At 1-51 (MASQLNEAIFAARRRNDDDDTTRSSVFTYTNSNNTRGPFEGPNYHIAPRWV) the chain is on the extracellular side. Asparagine 33 carries N-linked (GlcNAc...) asparagine glycosylation. The chain crosses the membrane as a helical span at residues 52–76 (YNLTSIWMIFVVFASVFTNGLVIVA). Residues 77–88 (TLKFKKLRHPLN) are Cytoplasmic-facing. A helical membrane pass occupies residues 89–113 (WILVNMAIADLGETVIASTISVFNQ). Topologically, residues 114 to 128 (IFGYFILGHPMCVLE) are extracellular. A disulfide bridge links cysteine 125 with cysteine 202. A helical transmembrane segment spans residues 129–148 (GFTVSTCGITALWSLTVIAW). At 149–167 (ERWFVVCKPFGNIKFDEKL) the chain is on the cytoplasmic side. The chain crosses the membrane as a helical span at residues 168–191 (AATGIIFSWVWSAGWCAPPMFGWS). Over 192-217 (RFWPHGLKTSCGPDVFSGSSDPGVQS) the chain is Extracellular. A helical membrane pass occupies residues 218-245 (YMLVLMITCCIIPLAIIILCYLHVWWTI). At 246–267 (RQVAQQQKESESTQKAEREVSR) the chain is on the cytoplasmic side. A helical membrane pass occupies residues 268–291 (MVVVMIVAYIFCWGPYTFFACFAA). Over 292-299 (FSPGYSFH) the chain is Extracellular. The helical transmembrane segment at 300 to 324 (PLAAALPAYFAKSATIYNPIIYVFM) threads the bilayer. Residue lysine 311 is modified to N6-(retinylidene)lysine. Residues 325-365 (NRQFRNCIYQMFGKKVDDGSEVSSTSRTEVSSVSNSSVSPA) lie on the Cytoplasmic side of the membrane. Residues 342–365 (DGSEVSSTSRTEVSSVSNSSVSPA) form a disordered region. Residues 345–365 (EVSSTSRTEVSSVSNSSVSPA) are compositionally biased toward low complexity.

Belongs to the G-protein coupled receptor 1 family. Opsin subfamily. In terms of processing, phosphorylated on some or all of the serine and threonine residues present in the C-terminal region.

It localises to the membrane. Visual pigments are the light-absorbing molecules that mediate vision. They consist of an apoprotein, opsin, covalently linked to cis-retinal. This is Red-sensitive opsin (opn1lw1) from Xenopus laevis (African clawed frog).